Consider the following 551-residue polypeptide: Chaperonin GroEL (551 aa).

ATP contacts are provided by residues 30–33, K51, 87–91, G415, 478–480, and D494; these read TLGP, DGTTT, and NAA.

Belongs to the chaperonin (HSP60) family. In terms of assembly, forms a cylinder of 14 subunits composed of two heptameric rings stacked back-to-back. Interacts with the co-chaperonin GroES.

It localises to the cytoplasm. The catalysed reaction is ATP + H2O + a folded polypeptide = ADP + phosphate + an unfolded polypeptide.. Together with its co-chaperonin GroES, plays an essential role in assisting protein folding. The GroEL-GroES system forms a nano-cage that allows encapsulation of the non-native substrate proteins and provides a physical environment optimized to promote and accelerate protein folding. In Syntrophotalea carbinolica (strain DSM 2380 / NBRC 103641 / GraBd1) (Pelobacter carbinolicus), this protein is Chaperonin GroEL.